The primary structure comprises 1225 residues: MSYQVCFKKYVKMRQWPHVLSLRVYASYFLLYNNLPLSSAMVHDGVHLISIKTILTDQPCPNTIYYAKYQVQRKDNEDAASLLEDKEAYLRNQDCIVHAKNDLLFVYDFQAIPSIPEESSSFMLLNSGAFSRLALFQKDELALLLDLYINFLQGLKKTVLYWLCKEYNFVPIYGVLLPLKLHPSFDTQLWNIYGYPVVDLQLSVLSKGHIEFYLKPTRQTVYRLSEVDNLVKKLDTVIRLAPTGCLATLTSVHANASAQTVDALKHRYGFSLTTTSKWVGVTLESSALEFSWPLELCFLETSALRMNDDSLSSNLTDLNNLVLPSNVVNNKKELTEFANEEAEASDKRKEGFTEKEETADAVVTLVPSHSSSPVNYSINSAKSTPASIKVNEEILVADHNVSDDILMEEIDDVGITEADFDYFDLPNVEEKVEMIEPNFANTMTTLDNEEINTSISQSNTSPNLNTHENIPKQMEIQSDDRMVTEDLNPYNVEVDIPEISLNISDSKIPTSAYMPSYYSAVIFPSSISSIFQKYNYGGKYWCPSPSLSTEDLFESFSVAESVTSTDEDICSTNFIQQDFTMEYNHDFFSSSKTPTNISEQSNPDSNYDTLSLAHQVLMNESKSANFDFSFLKSLDLQPTITLGKNDLLNAILSQNLWFRSLPFWKSMTTSFMMSQDVLNFSSYMRKPIRDYLEKILLGESSAVFLSKSPENYLSSINNGHHALNDNPPSQVNFSETLVNFSQPPRVLLKYNEKKLSLDSSAPENWISLCLQPYGESKDFEVFLLSSKSPDVSSKAISFFYDVQLAYENCKLGKLNLSETSINERVMGFSTNINETDNYDDNETTQSDTATSYEQLASVCVNELSGKNVLFFYFLEDDSEKLLKACQHFICVKDSIKRLGDNKFEDKSLRICTIPNSIFDSPNSHTTNSNSFFTKVSLDIYNNDPLLMDGSLKRREPAFLLKKPLLSTLNYQLKDINPRSSALGEYALHVTYTTVEEHLLICNWNDSYGEFETERRYFLQDLEIEDALQQILEVTFTFLNSMHMDWIVIVMKIGEMSDAEYLFWDQAIIPENLQGNVSLTVGYCSAEHGPGSTSKVFSRIPYSASSTVIRNNSSHELSLVAFIREMAMPVPNDEFKKISTILARGYLALDEDESYLPLLSIHLLISRNHDPYLMLNLILKHYLSMIYLQFRTYVSFSSLPLHISTVLYQKQLLQFMASDITHPVTS.

This sequence belongs to the Mediator complex subunit 13 family. Component of the srb8-11 complex which consists of rb8, srb9(TRAP240), srb10 and srb11. The srb8-11 complex associates with the Mediator complex thereby blocking association with RNA polymerase II and leading to reduced transcriptional activation by Mediator.

It localises to the nucleus. Its function is as follows. Component of the srb8-11 complex. The srb8-11 complex is a regulatory module of the Mediator complex which is itself involved in regulation of basal and activated RNA polymerase II-dependent transcription. The srb8-11 complex may be involved in the transcriptional repression of a subset of genes regulated by Mediator. It may inhibit the association of the Mediator complex with RNA polymerase II to form the holoenzyme complex. In Schizosaccharomyces pombe (strain 972 / ATCC 24843) (Fission yeast), this protein is Mediator of RNA polymerase II transcription subunit 13 (srb9).